A 341-amino-acid chain; its full sequence is Protein CbhE (341 aa).

Residues 287-297 (IDEENTSDSSE) are compositionally biased toward acidic residues. The disordered stretch occupies residues 287-341 (IDEENTSDSSEEGTSKNRFRDTLFSNVPDSSSDSENEQEREKKELAGKTPSFRLC). Positions 323-332 (EQEREKKELA) are enriched in basic and acidic residues.

It localises to the cytoplasm. Functionally, may be involved in the pathogenesis of acute Q fever. The polypeptide is Protein CbhE (cbhE) (Coxiella burnetii (strain RSA 493 / Nine Mile phase I)).